A 297-amino-acid polypeptide reads, in one-letter code: Lysenin (297 aa).

The N-terminal cap domain stretch occupies residues 10–33 (EQIEVDVVAVWKEGYVYENRGSTS). The interval 34 to 107 (VDQKITITKG…SKVIEHTITI (74 aa)) is beta-hairpin domain. Residues 108–156 (PPTSKFTRWQLNADVGGADIEYMYLIDEVTPIGGTQSIPQVITSRAKII) form an N-terminal cap domain region. Positions 157 to 297 (VGRQIILGKT…EDKWILEVVG (141 aa)) are C-terminal receptor-binding domain. An N-(acyl)-sphingosylphosphocholine contacts are provided by Lys185, Ser227, Tyr233, and Tyr282. Cysteines 272 and 283 form a disulfide.

Belongs to the lysenin family. In terms of assembly, binds to sphingomyelin as a monomer by using its C-terminal domain. Forms a nonamer when sphingomyelin/lysenin ratio is lower than ca 500. Oligomerization, but not binding, is influenced by the fluidity of sphingomyelin. In terms of tissue distribution, expressed by coelomocytes.

It localises to the secreted. Its subcellular location is the target cell membrane. Pore-forming toxin that defensively acts against parasitic microorganisms by forming pores in sphingomyelin-containing membranes. Has hemolytic activity and is also cytotoxic to spermatozoa of some species of invertebrates and many species of vertebrates and to amphibian larvae, guinea pig polymorphonuclear leukocytes, chicken fibroblasts, normal spleen cells and various tumor cells. Is lethal for various species of reptiles, amphibian, birds and mammals. Induces smooth muscle contraction. It binds sphingomyelin and induces hemolysis in the same manner as lysenin-related protein 2, and is 10-fold more effective than lysenin-related protein 1. The polypeptide is Lysenin (Eisenia fetida (Red wiggler worm)).